The chain runs to 111 residues: Aspartate 1-decarboxylase (111 aa).

Ser-25 serves as the catalytic Schiff-base intermediate with substrate; via pyruvic acid. Residue Ser-25 is modified to Pyruvic acid (Ser). Thr-57 serves as a coordination point for substrate. Tyr-58 acts as the Proton donor in catalysis. 73–75 serves as a coordination point for substrate; that stretch reads GPA.

Belongs to the PanD family. Heterooctamer of four alpha and four beta subunits. Pyruvate serves as cofactor. Is synthesized initially as an inactive proenzyme, which is activated by self-cleavage at a specific serine bond to produce a beta-subunit with a hydroxyl group at its C-terminus and an alpha-subunit with a pyruvoyl group at its N-terminus.

The protein localises to the cytoplasm. The enzyme catalyses L-aspartate + H(+) = beta-alanine + CO2. It participates in cofactor biosynthesis; (R)-pantothenate biosynthesis; beta-alanine from L-aspartate: step 1/1. Its function is as follows. Catalyzes the pyruvoyl-dependent decarboxylation of aspartate to produce beta-alanine. This is Aspartate 1-decarboxylase from Francisella tularensis subsp. tularensis (strain FSC 198).